Consider the following 390-residue polypeptide: MNQANNVLDSIYQPDLEIMNQPEIELDDLLIEEDEDLLLADDGDIDEFLEPQTDEDDAKSGKAAKSRRRTQSKKKHYTEDSIRLYLQEIGRIRLLRADEEIELARKIADLLELERVRERLSEKLERDPRDSEWAEAVQLPLPAFRYRLHIGRRAKDKMVQSNLRLVVSIAKKYMNRGLSFQDLIQEGSLGLIRAAEKFDHEKGYKFSTYATWWIRQAITRAIADQSRTIRLPVHLYETISRIKKTTKLLSQEMGRKPTEEEIATRMEMTIEKLRFIAKSAQLPISLETPIGKEEDSRLGDFIESDGETPEDQVSKNLLREDLEKVLDSLSPRERDVLRLRYGLDDGRMKTLEEIGQIFNVTRERIRQIEAKALRKLRHPNRNSVLKEYIR.

Residues 48–57 show a composition bias toward acidic residues; the sequence is FLEPQTDEDD. A disordered region spans residues 48 to 75; sequence FLEPQTDEDDAKSGKAAKSRRRTQSKKK. Positions 62–75 are enriched in basic residues; the sequence is KAAKSRRRTQSKKK. A sigma-70 factor domain-2 region spans residues 158–228; it reads MVQSNLRLVV…TRAIADQSRT (71 aa). The short motif at 182-185 is the Interaction with polymerase core subunit RpoC element; the sequence is DLIQ. The tract at residues 237–312 is sigma-70 factor domain-3; that stretch reads ETISRIKKTT…ESDGETPEDQ (76 aa). The interval 325–378 is sigma-70 factor domain-4; it reads VLDSLSPRERDVLRLRYGLDDGRMKTLEEIGQIFNVTRERIRQIEAKALRKLRH. A DNA-binding region (H-T-H motif) is located at residues 351-370; it reads LEEIGQIFNVTRERIRQIEA.

It belongs to the sigma-70 factor family. RpoD/SigA subfamily. As to quaternary structure, interacts transiently with the RNA polymerase catalytic core.

It localises to the cytoplasm. Functionally, sigma factors are initiation factors that promote the attachment of RNA polymerase to specific initiation sites and are then released. This sigma factor is the primary sigma factor during exponential growth. The chain is RNA polymerase sigma factor SigA from Nostoc sp. (strain PCC 7120 / SAG 25.82 / UTEX 2576).